A 233-amino-acid chain; its full sequence is Ribulose-phosphate 3-epimerase (233 aa).

A substrate-binding site is contributed by S16. A divalent metal cation is bound by residues H41, D43, and H74. The active-site Proton acceptor is D43. Residues H74, 150-153 (GFCG), 185-187 (DGG), and 207-208 (AS) contribute to the substrate site. D185 serves as a coordination point for a divalent metal cation. The active-site Proton donor is the D185.

It belongs to the ribulose-phosphate 3-epimerase family. The cofactor is a divalent metal cation.

The catalysed reaction is D-ribulose 5-phosphate = D-xylulose 5-phosphate. Its pathway is carbohydrate degradation. Its function is as follows. Catalyzes the reversible epimerization of D-ribulose 5-phosphate to D-xylulose 5-phosphate. The chain is Ribulose-phosphate 3-epimerase from Chlamydia trachomatis serovar D (strain ATCC VR-885 / DSM 19411 / UW-3/Cx).